Reading from the N-terminus, the 344-residue chain is Phenylalanine--tRNA ligase alpha subunit (344 aa).

Mg(2+) is bound at residue E255.

The protein belongs to the class-II aminoacyl-tRNA synthetase family. Phe-tRNA synthetase alpha subunit type 1 subfamily. Tetramer of two alpha and two beta subunits. The cofactor is Mg(2+).

It localises to the cytoplasm. It carries out the reaction tRNA(Phe) + L-phenylalanine + ATP = L-phenylalanyl-tRNA(Phe) + AMP + diphosphate + H(+). The protein is Phenylalanine--tRNA ligase alpha subunit of Sulfurihydrogenibium sp. (strain YO3AOP1).